A 380-amino-acid chain; its full sequence is Cytochrome b (380 aa).

4 consecutive transmembrane segments (helical) span residues 33–53 (FGSL…FLAM), 77–98 (WFIR…YIHV), 113–133 (WNVG…GYVL), and 178–198 (FFAF…VHLL). 2 residues coordinate heme b: His83 and His97. Heme b contacts are provided by His182 and His196. An a ubiquinone-binding site is contributed by His201. The next 4 helical transmembrane spans lie at 226–246 (TKDI…VLFA), 288–308 (LGGV…PYLY), 320–340 (LTQL…WIGA), and 347–367 (FITI…ILMP).

This sequence belongs to the cytochrome b family. As to quaternary structure, the cytochrome bc1 complex contains 11 subunits: 3 respiratory subunits (MT-CYB, CYC1 and UQCRFS1), 2 core proteins (UQCRC1 and UQCRC2) and 6 low-molecular weight proteins (UQCRH/QCR6, UQCRB/QCR7, UQCRQ/QCR8, UQCR10/QCR9, UQCR11/QCR10 and a cleavage product of UQCRFS1). This cytochrome bc1 complex then forms a dimer. Requires heme b as cofactor.

It localises to the mitochondrion inner membrane. In terms of biological role, component of the ubiquinol-cytochrome c reductase complex (complex III or cytochrome b-c1 complex) that is part of the mitochondrial respiratory chain. The b-c1 complex mediates electron transfer from ubiquinol to cytochrome c. Contributes to the generation of a proton gradient across the mitochondrial membrane that is then used for ATP synthesis. The chain is Cytochrome b (MT-CYB) from Cricetomys emini (Emin's giant pouched rat).